The following is a 344-amino-acid chain: Transcription factor HHO3 (344 aa).

Disordered stretches follow at residues 90 to 122 (KWSS…DKKK) and 156 to 212 (AFQP…KQRR). Residues 97–106 (DETDKDEEAE) show a composition bias toward acidic residues. The segment covering 178 to 188 (TPTSTTTTSST) has biased composition (low complexity). One can recognise an HTH myb-type domain in the interval 206–266 (SNRKQRRCWS…HLQKYRLHTR (61 aa)). The segment at residues 237–262 (PKQIRDLMKVDGLTNDEVKSHLQKYR) is a DNA-binding region (H-T-H motif). A disordered region spans residues 306–344 (PVATQPPQSSTSGERSNRGCKSPATSSTTTHTPHLLPLS). Polar residues predominate over residues 310–319 (QPPQSSTSGE). Residues 330–344 (TSSTTTHTPHLLPLS) show a composition bias toward low complexity.

It localises to the nucleus. Its function is as follows. Probable transcription factor involved in phosphate signaling in roots. The chain is Transcription factor HHO3 from Arabidopsis thaliana (Mouse-ear cress).